We begin with the raw amino-acid sequence, 769 residues long: Trehalose 6-phosphate phosphorylase (769 aa).

342–343 provides a ligand contact to substrate; sequence WD. Glu480 acts as the Proton donor in catalysis. 589–590 contacts substrate; that stretch reads KQ.

Belongs to the glycosyl hydrolase 65 family. As to quaternary structure, monomer.

It carries out the reaction alpha,alpha-trehalose 6-phosphate + phosphate = beta-D-glucose 1-phosphate + D-glucose 6-phosphate. Catalyzes the conversion of trehalose 6-phosphate into glucose 1-phosphate and glucose 6-phosphate. This Lactococcus lactis subsp. lactis (strain IL1403) (Streptococcus lactis) protein is Trehalose 6-phosphate phosphorylase (trePP).